Here is a 292-residue protein sequence, read N- to C-terminus: Peroxisomal 2,4-dienoyl-CoA reductase [(3E)-enoyl-CoA-producing] (292 aa).

Residue alanine 2 is modified to N-acetylalanine. Residues 35 to 40 (GGGSGI), 60 to 64 (RSLQK), and aspartate 86 contribute to the NADP(+) site. Arginine 60 serves as a coordination point for substrate. Lysine 64 carries the N6-acetyllysine modification. Substrate contacts are provided by residues arginine 88, phenylalanine 118, and 126–128 (SFN). Lysine 151 is subject to N6-acetyllysine. Residues lysine 182 and 208–214 (PGAISGT) contribute to the NADP(+) site. Arginine 219 contacts substrate. Phosphoserine is present on serine 287. The Microbody targeting signal motif lies at 290-292 (AKL). At lysine 291 the chain carries N6-acetyllysine.

It belongs to the short-chain dehydrogenases/reductases (SDR) family. 2,4-dienoyl-CoA reductase subfamily. Monomer, dimer and oligomer.

It localises to the peroxisome. The enzyme catalyses a (2E,4Z)-dienoyl-CoA + NADPH + H(+) = a 4,5-saturated-(3E)-enoyl-CoA + NADP(+). It carries out the reaction a (2E,4E)-dienoyl-CoA + NADPH + H(+) = a 4,5-saturated-(3E)-enoyl-CoA + NADP(+). It catalyses the reaction (2E,4E)-hexadienoyl-CoA + NADPH + H(+) = (3E)-hexenoyl-CoA + NADP(+). The catalysed reaction is (2E,4E)-decadienoyl-CoA + NADPH + H(+) = (3E)-decenoyl-CoA + NADP(+). The enzyme catalyses (2E,4Z,7Z,10Z,13Z,16Z,19Z)-docosaheptaenoyl-CoA + NADPH + H(+) = (3E,7Z,10Z,13Z,16Z,19Z)-docosahexaenoyl-CoA + NADP(+). Its function is as follows. Auxiliary enzyme of beta-oxidation. Participates in the degradation of unsaturated fatty enoyl-CoA esters having double bonds in both even- and odd-numbered positions in peroxisome. Catalyzes the NADP-dependent reduction of 2,4-dienoyl-CoA to yield trans-3-enoyl-CoA. Has activity towards short and medium chain 2,4-dienoyl-CoAs, but also towards 2,4,7,10,13,16,19-docosaheptaenoyl-CoA, suggesting that it does not constitute a rate limiting step in the peroxisomal degradation of docosahexaenoic acid. The protein is Peroxisomal 2,4-dienoyl-CoA reductase [(3E)-enoyl-CoA-producing] (Decr2) of Mus musculus (Mouse).